The following is a 316-amino-acid chain: MTKEFHHVTVLLHETIDMLDVKPDGIYVDATLGGAGHSEYLLSKLSEKGHLYAFDQDQNAIDNAQKRLAPYIEKGMVTFIKDNFRHLQARLRETGVQEIDGICYDLGVSSPQLDQRERGFSYKKDAPLDMRMNQDASLTAYEVVNNYDYHDLVRIFFKYGEDKFSKQIARKIEQAREVKPIETTTELAEIIKLVKPAKELKKKGHPAKQIFQAIRIEVNDELGAADESIQQAMDMLALDGRISVITFHSLEDRLTKQLFKEASTVEVPKGLPFIPDDLKPKMELVSRKPILPSAEELEANNRSHSAKLRVVRKIHK.

S-adenosyl-L-methionine is bound by residues 35–37, Asp-55, Phe-84, Asp-105, and Gln-112; that span reads AGH.

This sequence belongs to the methyltransferase superfamily. RsmH family.

It is found in the cytoplasm. It carries out the reaction cytidine(1402) in 16S rRNA + S-adenosyl-L-methionine = N(4)-methylcytidine(1402) in 16S rRNA + S-adenosyl-L-homocysteine + H(+). Functionally, specifically methylates the N4 position of cytidine in position 1402 (C1402) of 16S rRNA. The protein is Ribosomal RNA small subunit methyltransferase H of Streptococcus pneumoniae (strain ATCC 700669 / Spain 23F-1).